The primary structure comprises 463 residues: Type IV secretion system protein PtlD (463 aa).

The first 24 residues, 1-24, serve as a signal peptide directing secretion; sequence MAGLSRILLSCTLACLLAGQAAQA. 5 helical membrane passes run 118–138, 232–252, 253–273, 294–314, and 333–353; these read LQPL…YALL, WLLC…LAAS, LLIV…LFLV, ALVF…VLAG, and MLAA…VPLA. Residues 376–410 show a composition bias toward low complexity; that stretch reads AHRQAAARQYAPRPAAAAAAAGPHQAGTYAASATP. The tract at residues 376-463 is disordered; the sequence is AHRQAAARQY…RVLPRKPNLP (88 aa). The span at 411 to 420 shows a compositional bias: pro residues; it reads APAPARPAPS. Residues 441-455 are compositionally biased toward basic and acidic residues; the sequence is VRRDDRPAPAPDRRV.

The protein resides in the cell membrane. Functionally, component of the type IV secretion system ptl required for secretion of assembled pertussis toxin (PTX) through the outer membrane. This is Type IV secretion system protein PtlD (ptlD) from Bordetella pertussis (strain Tohama I / ATCC BAA-589 / NCTC 13251).